We begin with the raw amino-acid sequence, 238 residues long: 14-3-3 family protein artA (238 aa).

This sequence belongs to the 14-3-3 family.

Functionally, 14-3-3 family protein that plays a role in the morphological differentiation and secondary metabolism biosynthesis. Required for normal fungal morphogenesis in an environment-dependent manner, affecting the balance between production of conidiophores and the formation of sclerotia, resistant structures that are necessary for the dissemination and survival. Acts as a positive regulator of conidiation and a negative regulator of sclerotial production. Also regulates the production of secondary metabolites such as aflatoxin, but also the indole-tetramic acid mycotoxin cyclopiazonic acid (CPA) and ustiloxin, an inhibitor of microtubule assembly. This chain is 14-3-3 family protein artA, found in Aspergillus flavus (strain ATCC 200026 / FGSC A1120 / IAM 13836 / NRRL 3357 / JCM 12722 / SRRC 167).